Consider the following 547-residue polypeptide: Probable high-affinity hexose transporter ght8, mitochondrial (547 aa).

The transit peptide at 1-21 (MGKTLTIVMLVFVSMAGWMFG) directs the protein to the mitochondrion. The Mitochondrial intermembrane segment spans residues 22-86 (ADTGSIGGIT…SPLMDRIGKR (65 aa)). A helical transmembrane segment spans residues 87-107 (VSIMFWTIVYLIGIILQVTAV). Topologically, residues 108 to 112 (PSWVQ) are cytoplasmic. Residues 113–133 (IMVAKIWTGLAIGALSVLAPG) traverse the membrane as a helical segment. Residues 134–144 (FQSEVAPATLR) are Mitochondrial intermembrane-facing. Residues 145-165 (GTIVTTYQLAVTGGIFIAACI) traverse the membrane as a helical segment. Residues 166-179 (NMGTHKLHKTAQWR) are Cytoplasmic-facing. Residues 180-200 (VSMGINLLWGIIMFIGISFLP) traverse the membrane as a helical segment. The Mitochondrial intermembrane segment spans residues 201 to 304 (ESPRYLIAIG…TGMNSPYLSA (104 aa)). The helical transmembrane segment at 305–325 (LILDAVNFGCTFGGLFVLEFF) threads the bilayer. Over 326 to 328 (GRR) the chain is Cytoplasmic. A helical transmembrane segment spans residues 329–349 (MPLIIGGVWQSITFFIYAAVG). Over 350–363 (NRALTRKNGTSNHR) the chain is Mitochondrial intermembrane. A helical transmembrane segment spans residues 364-384 (AGAVMIVFSCLFIFSFAQTWG). Residues 385 to 404 (PAAYVIVGESYPIRYRSKCA) lie on the Cytoplasmic side of the membrane. Residues 405–425 (AVATTGNWLWGFLITFFTPFI) form a helical membrane-spanning segment. The Mitochondrial intermembrane segment spans residues 426-432 (SDSIGFK). Residues 433 to 453 (YGYIFAACNLCAACIIFLFAH) traverse the membrane as a helical segment. Topologically, residues 454–547 (ETKGLTLEEI…NYVDEQDRYA (94 aa)) are cytoplasmic. Residues 482–547 (GQAAKQQQEV…NYVDEQDRYA (66 aa)) form a disordered region. Residues 517–529 (TSSNDITSSTSSS) show a composition bias toward low complexity. A Phosphoserine modification is found at serine 519. Phosphothreonine occurs at positions 523 and 526. A phosphoserine mark is found at serine 527, serine 528, serine 529, and serine 537.

This sequence belongs to the major facilitator superfamily. Sugar transporter (TC 2.A.1.1) family.

The protein resides in the mitochondrion membrane. The polypeptide is Probable high-affinity hexose transporter ght8, mitochondrial (ght8) (Schizosaccharomyces pombe (strain 972 / ATCC 24843) (Fission yeast)).